The following is a 62-amino-acid chain: Small ribosomal subunit protein uS14 (62 aa).

Zn(2+) is bound by residues Cys25, Cys28, Cys41, and Cys44.

It belongs to the universal ribosomal protein uS14 family. Zinc-binding uS14 subfamily. Part of the 30S ribosomal subunit. Contacts proteins S3 and S10. Requires Zn(2+) as cofactor.

Its function is as follows. Binds 16S rRNA, required for the assembly of 30S particles and may also be responsible for determining the conformation of the 16S rRNA at the A site. The protein is Small ribosomal subunit protein uS14 of Sulfurihydrogenibium sp. (strain YO3AOP1).